The chain runs to 123 residues: Ribosome-binding factor A (123 aa).

This sequence belongs to the RbfA family. Monomer. Binds 30S ribosomal subunits, but not 50S ribosomal subunits or 70S ribosomes.

It is found in the cytoplasm. Functionally, one of several proteins that assist in the late maturation steps of the functional core of the 30S ribosomal subunit. Associates with free 30S ribosomal subunits (but not with 30S subunits that are part of 70S ribosomes or polysomes). Required for efficient processing of 16S rRNA. May interact with the 5'-terminal helix region of 16S rRNA. This Neisseria gonorrhoeae (strain NCCP11945) protein is Ribosome-binding factor A.